A 324-amino-acid polypeptide reads, in one-letter code: 6-methylsalicylic acid decarboxylase (324 aa).

Zn(2+) contacts are provided by H7, H9, H157, and D274.

It belongs to the metallo-dependent hydrolases superfamily. ACMSD family. Monomer.

The protein localises to the cytoplasm. Its subcellular location is the cytosol. The enzyme catalyses 6-methylsalicylate + H(+) = 3-methylphenol + CO2. Its pathway is mycotoxin biosynthesis; patulin biosynthesis. Functionally, 6-methylsalicylic acid decarboxylase; part of the gene cluster that mediates the biosynthesis of patulin, an acetate-derived tetraketide mycotoxin produced by several fungal species that shows antimicrobial properties against several bacteria. PatG catalyzes the decarboxylation of 6-methylsalicylic acid to yield m-cresol. The pathway begins with the synthesis of 6-methylsalicylic acid by the polyketide synthase (PKS) patK via condensation of acetate and malonate units. The 6-methylsalicylic acid decarboxylase patG then catalyzes the decarboxylation of 6-methylsalicylic acid to yield m-cresol (also known as 3-methylphenol). These first reactions occur in the cytosol. The intermediate m-cresol is then transported into the endoplasmic reticulum where the cytochrome P450 monooxygenase patH converts it to m-hydroxybenzyl alcohol, which is further converted to gentisyl alcohol by the cytochrome P450 monooxygenase patI. The oxidoreductases patJ and patO further convert gentisyl alcohol to isoepoxydon in the vacuole. PatN catalyzes then the transformation of isoepoxydon into phyllostine. The cluster protein patF is responsible for the conversion from phyllostine to neopatulin whereas the alcohol dehydrogenase patD converts neopatulin to E-ascladiol. The steps between isoepoxydon and E-ascladiol occur in the cytosol, and E-ascladiol is probably secreted to the extracellular space by one of the cluster-specific transporters patC or patM. Finally, the secreted patulin synthase patE catalyzes the conversion of E-ascladiol to patulin. This is 6-methylsalicylic acid decarboxylase from Penicillium expansum (Blue mold rot fungus).